Here is a 444-residue protein sequence, read N- to C-terminus: Chitinase-like protein Idgf1 (444 aa).

The signal sequence occupies residues 1–20 (MTSLLFVILNIILTLHLCAG). In terms of domain architecture, GH18 spans 29-444 (KRLICYYDAQ…PILRSVRGHL (416 aa)). An intrachain disulfide couples C33 to C60. Residues N213, N225, and N335 are each glycosylated (N-linked (GlcNAc...) asparagine). C346 and C429 form a disulfide bridge.

The protein belongs to the glycosyl hydrolase 18 family. IDGF subfamily. In terms of processing, glycosylated.

The protein localises to the secreted. Functionally, cooperates with insulin-like peptides to stimulate the proliferation, polarization and motility of imaginal disk cells. May act by stabilizing the binding of insulin-like peptides to its receptor through a simultaneous interaction with both molecules to form a multiprotein signaling complex. This Glossina morsitans morsitans (Savannah tsetse fly) protein is Chitinase-like protein Idgf1 (Idgf1).